The primary structure comprises 101 residues: Small ribosomal subunit protein uS14 (101 aa).

It belongs to the universal ribosomal protein uS14 family. In terms of assembly, part of the 30S ribosomal subunit. Contacts proteins S3 and S10.

Binds 16S rRNA, required for the assembly of 30S particles and may also be responsible for determining the conformation of the 16S rRNA at the A site. The chain is Small ribosomal subunit protein uS14 from Shewanella woodyi (strain ATCC 51908 / MS32).